A 478-amino-acid chain; its full sequence is Hemolysin secretion protein D, plasmid (478 aa).

Topologically, residues 1–59 are cytoplasmic; the sequence is MKTWLMGFSEFLLRYKLVWSETWKIRKQLDTPVREKDENEFLPAHLELIETPVSRRPRL. Residues 60–80 traverse the membrane as a helical; Signal-anchor for type II membrane protein segment; the sequence is VAYFIMGFLVIAFILSVLGQV. At 81 to 478 the chain is on the periplasmic side; that stretch reads EIVATANGKL…ESVTESLRER (398 aa).

It belongs to the membrane fusion protein (MFP) (TC 8.A.1) family.

It is found in the cell inner membrane. Involved in the transport of hemolysin A. The polypeptide is Hemolysin secretion protein D, plasmid (hlyD) (Escherichia coli).